Here is a 371-residue protein sequence, read N- to C-terminus: Queuine tRNA-ribosyltransferase (371 aa).

Residue aspartate 92 is the Proton acceptor of the active site. Residues 92 to 96 (DSGGF), aspartate 147, glutamine 190, and glycine 217 contribute to the substrate site. The tract at residues 248–254 (GVGKPID) is RNA binding. Residue aspartate 267 is the Nucleophile of the active site. An RNA binding; important for wobble base 34 recognition region spans residues 272 to 276 (TRSGR).

The protein belongs to the queuine tRNA-ribosyltransferase family. As to quaternary structure, homodimer. Within each dimer, one monomer is responsible for RNA recognition and catalysis, while the other monomer binds to the replacement base PreQ1.

It catalyses the reaction 7-aminomethyl-7-carbaguanine + guanosine(34) in tRNA = 7-aminomethyl-7-carbaguanosine(34) in tRNA + guanine. It functions in the pathway tRNA modification; tRNA-queuosine biosynthesis. Catalyzes the base-exchange of a guanine (G) residue with the queuine precursor 7-aminomethyl-7-deazaguanine (PreQ1) at position 34 (anticodon wobble position) in tRNAs with GU(N) anticodons (tRNA-Asp, -Asn, -His and -Tyr). Catalysis occurs through a double-displacement mechanism. The nucleophile active site attacks the C1' of nucleotide 34 to detach the guanine base from the RNA, forming a covalent enzyme-RNA intermediate. The proton acceptor active site deprotonates the incoming PreQ1, allowing a nucleophilic attack on the C1' of the ribose to form the product. After dissociation, two additional enzymatic reactions on the tRNA convert PreQ1 to queuine (Q), resulting in the hypermodified nucleoside queuosine (7-(((4,5-cis-dihydroxy-2-cyclopenten-1-yl)amino)methyl)-7-deazaguanosine). This chain is Queuine tRNA-ribosyltransferase, found in Caulobacter vibrioides (strain ATCC 19089 / CIP 103742 / CB 15) (Caulobacter crescentus).